A 137-amino-acid polypeptide reads, in one-letter code: Fluoride-specific ion channel FluC (137 aa).

Helical transmembrane passes span Ile-11–Phe-31, Gly-42–Leu-62, Leu-75–Phe-95, and Gly-107–Leu-127. 2 residues coordinate Na(+): Gly-82 and Thr-85.

It belongs to the fluoride channel Fluc/FEX (TC 1.A.43) family.

Its subcellular location is the cell inner membrane. The catalysed reaction is fluoride(in) = fluoride(out). Na(+) is not transported, but it plays an essential structural role and its presence is essential for fluoride channel function. Its function is as follows. Fluoride-specific ion channel. Important for reducing fluoride concentration in the cell, thus reducing its toxicity. The polypeptide is Fluoride-specific ion channel FluC (Trichormus variabilis (strain ATCC 29413 / PCC 7937) (Anabaena variabilis)).